Reading from the N-terminus, the 25-residue chain is Antimicrobial peptide 2 (25 aa).

In terms of tissue distribution, expressed by the skin glands.

It localises to the secreted. In terms of biological role, has very strong antibacterial activity against Gram-positive bacterium S.aureus and very weak activity against Gram-negative bacterium E.coli. The sequence is that of Antimicrobial peptide 2 from Xenopus tropicalis (Western clawed frog).